The chain runs to 504 residues: Maturase K (504 aa).

This sequence belongs to the intron maturase 2 family. MatK subfamily.

The protein resides in the plastid. It is found in the chloroplast. Its function is as follows. Usually encoded in the trnK tRNA gene intron. Probably assists in splicing its own and other chloroplast group II introns. The sequence is that of Maturase K from Fagus hayatae (Formosan elm).